The sequence spans 239 residues: Large ribosomal subunit protein uL2 (239 aa).

The tract at residues 200-239 (VNHPHGGKEHHIGRPSTVSRRAPPGRKVGHIAARRTGRRK) is disordered. Residues 222 to 239 (PPGRKVGHIAARRTGRRK) are compositionally biased toward basic residues.

Belongs to the universal ribosomal protein uL2 family. In terms of assembly, part of the 50S ribosomal subunit. Forms a bridge to the 30S subunit in the 70S ribosome.

In terms of biological role, one of the primary rRNA binding proteins. Required for association of the 30S and 50S subunits to form the 70S ribosome, for tRNA binding and peptide bond formation. It has been suggested to have peptidyltransferase activity; this is somewhat controversial. Makes several contacts with the 16S rRNA in the 70S ribosome. This chain is Large ribosomal subunit protein uL2, found in Thermococcus kodakarensis (strain ATCC BAA-918 / JCM 12380 / KOD1) (Pyrococcus kodakaraensis (strain KOD1)).